Here is a 299-residue protein sequence, read N- to C-terminus: Zinc finger protein 414 (299 aa).

Polar residues-rich tracts occupy residues 1 to 20 (MEEP…SSSG) and 69 to 81 (DSCQ…TGVG). A disordered region spans residues 1-98 (MEEPSRPSSD…PRRRPPPGKQ (98 aa)). C2H2-type zinc fingers lie at residues 99 to 123 (IPCS…LRTH) and 135 to 159 (FRCS…GKLH). The C2H2-type 3; degenerate zinc finger occupies 166 to 190 (FKCENCLLRFRTHRSLFKHLHVCID). 2 disordered regions span residues 193–228 (QNPA…PFPL) and 254–299 (PRLR…GACR). Positions 203 to 215 (LDKEPPVPERPPE) are enriched in basic and acidic residues. A compositionally biased stretch (low complexity) spans 217–228 (DPSSSLGLPFPL).

It belongs to the krueppel C2H2-type zinc-finger protein family.

The protein resides in the nucleus. Its function is as follows. May be involved in transcriptional regulation. The polypeptide is Zinc finger protein 414 (Znf414) (Mus musculus (Mouse)).